A 278-amino-acid polypeptide reads, in one-letter code: Protein saf1 (278 aa).

Disordered stretches follow at residues 1-43 (MLSK…RNMS), 81-210 (KKNI…DIEE), and 240-264 (QKLAKGQKIGQPDRDVSSQVQEDKD). Composition is skewed to basic and acidic residues over residues 22 to 38 (QIKVREERAKRHEERLS) and 90 to 103 (GRVESDKTKEAERQ). 2 stretches are compositionally biased toward basic residues: residues 104-116 (HKPRKPFIPKNPK) and 169-183 (REKKNKSFKPKHHKK). Positions 186 to 202 (INASSAQPKSTTTTEAA) are enriched in polar residues.

Its subcellular location is the nucleus. The protein localises to the nucleolus. This Schizosaccharomyces pombe (strain 972 / ATCC 24843) (Fission yeast) protein is Protein saf1 (saf1).